The following is a 177-amino-acid chain: ATP synthase subunit delta (177 aa).

Belongs to the ATPase delta chain family. In terms of assembly, F-type ATPases have 2 components, F(1) - the catalytic core - and F(0) - the membrane proton channel. F(1) has five subunits: alpha(3), beta(3), gamma(1), delta(1), epsilon(1). F(0) has three main subunits: a(1), b(2) and c(10-14). The alpha and beta chains form an alternating ring which encloses part of the gamma chain. F(1) is attached to F(0) by a central stalk formed by the gamma and epsilon chains, while a peripheral stalk is formed by the delta and b chains.

Its subcellular location is the cell inner membrane. F(1)F(0) ATP synthase produces ATP from ADP in the presence of a proton or sodium gradient. F-type ATPases consist of two structural domains, F(1) containing the extramembraneous catalytic core and F(0) containing the membrane proton channel, linked together by a central stalk and a peripheral stalk. During catalysis, ATP synthesis in the catalytic domain of F(1) is coupled via a rotary mechanism of the central stalk subunits to proton translocation. Its function is as follows. This protein is part of the stalk that links CF(0) to CF(1). It either transmits conformational changes from CF(0) to CF(1) or is implicated in proton conduction. The protein is ATP synthase subunit delta of Colwellia psychrerythraea (strain 34H / ATCC BAA-681) (Vibrio psychroerythus).